We begin with the raw amino-acid sequence, 906 residues long: Protein transport protein SEC24-2 (906 aa).

Zn(2+) contacts are provided by cysteine 222, cysteine 225, cysteine 244, and cysteine 247. A zinc finger-like region spans residues 222–247 (CRRCRSYMNPFVTFIEQGRRWRCNFC).

Belongs to the SEC23/SEC24 family. SEC24 subfamily. As to quaternary structure, the COPII coat is composed of at least 5 proteins: the SEC23/24 complex, the SEC13/31 complex, and the protein SAR1. Golgi apparatus membrane; Peripheral membrane protein; Cytoplasmic side.

It localises to the cytoplasm. The protein localises to the cytoplasmic vesicle. It is found in the COPII-coated vesicle membrane. The protein resides in the endoplasmic reticulum membrane. Its subcellular location is the golgi apparatus membrane. In terms of biological role, component of the coat protein complex II (COPII) which promotes the formation of transport vesicles from the endoplasmic reticulum (ER). The coat has two main functions, the physical deformation of the endoplasmic reticulum membrane into vesicles and the selection of cargo molecules. The chain is Protein transport protein SEC24-2 (SEC242) from Candida glabrata (strain ATCC 2001 / BCRC 20586 / JCM 3761 / NBRC 0622 / NRRL Y-65 / CBS 138) (Yeast).